The following is a 1284-amino-acid chain: ATP-dependent helicase fft2 (1284 aa).

Polar residues-rich tracts occupy residues 1 to 10 (MLPYNSNYLS) and 20 to 57 (ENPQ…AMYG). Disordered stretches follow at residues 1-57 (MLPY…AMYG), 185-252 (AQPP…LPPV), 317-339 (KQSP…QSQK), 353-388 (STQA…EEPE), and 446-465 (PDDV…KNPM). Residues 201–241 (RSNSRSSARSTARSAPRSTQRSRSSSANPVTTPPVNNTLLT) are compositionally biased toward low complexity. Polar residues-rich tracts occupy residues 320–339 (PVAS…QSQK) and 353–372 (STQA…ASKK). Residue serine 323 is modified to Phosphoserine. Over residues 376-388 (EEDEFYDSEEEPE) the composition is skewed to acidic residues. Serine 383 is modified (phosphoserine). Residues 562–730 (HLLYQQKLSG…VSLLAFILPN (169 aa)) form the Helicase ATP-binding domain. Residue 575–582 (DEMGLGKT) coordinates ATP. Positions 681–684 (DEGH) match the DEGH box motif. The interval 816-839 (QQLRRDDKRNKRSKNDEESDGKSL) is disordered. A compositionally biased stretch (basic and acidic residues) spans 818-831 (LRRDDKRNKRSKND). A Helicase C-terminal domain is found at 928–1079 (VLKELLPKMK…SLSSDGKDRE (152 aa)). The interval 1088–1284 (DMLDEENNGN…SEVDNNAAKD (197 aa)) is disordered. Residues 1095 to 1107 (NGNNTKPEITGNE) are compositionally biased toward polar residues. A compositionally biased stretch (basic and acidic residues) spans 1143-1177 (EKTDLADGDEKANIKTEMKSETVEGDNKELRETMK). Polar residues predominate over residues 1180–1194 (NVQTDSNAAVPSSKS). 2 stretches are compositionally biased toward basic and acidic residues: residues 1243 to 1256 (QLEK…KKPD) and 1266 to 1284 (EEEK…AAKD).

This sequence belongs to the SNF2/RAD54 helicase family.

The protein resides in the cytoplasm. The protein localises to the nucleus. It catalyses the reaction ATP + H2O = ADP + phosphate + H(+). DNA helicase that possesses intrinsic ATP-dependent nucleosome-remodeling activity and is required for heterochromatin organization. The chain is ATP-dependent helicase fft2 (fft2) from Schizosaccharomyces pombe (strain 972 / ATCC 24843) (Fission yeast).